A 421-amino-acid chain; its full sequence is UDP-N-acetylglucosamine 1-carboxyvinyltransferase (421 aa).

22–23 (KN) contributes to the phosphoenolpyruvate binding site. R92 serves as a coordination point for UDP-N-acetyl-alpha-D-glucosamine. The active-site Proton donor is C116. The residue at position 116 (C116) is a 2-(S-cysteinyl)pyruvic acid O-phosphothioketal. 2 residues coordinate UDP-N-acetyl-alpha-D-glucosamine: D306 and V328.

Belongs to the EPSP synthase family. MurA subfamily.

It is found in the cytoplasm. The enzyme catalyses phosphoenolpyruvate + UDP-N-acetyl-alpha-D-glucosamine = UDP-N-acetyl-3-O-(1-carboxyvinyl)-alpha-D-glucosamine + phosphate. It functions in the pathway cell wall biogenesis; peptidoglycan biosynthesis. Cell wall formation. Adds enolpyruvyl to UDP-N-acetylglucosamine. The protein is UDP-N-acetylglucosamine 1-carboxyvinyltransferase of Thermotoga maritima (strain ATCC 43589 / DSM 3109 / JCM 10099 / NBRC 100826 / MSB8).